Consider the following 332-residue polypeptide: Abscisic acid-inducible protein kinase (332 aa).

ATP-binding positions include 1 to 8 (GSGNFGVA) and lysine 23. A Protein kinase domain is found at 1-250 (GSGNFGVAKL…IPEIKNHPWF (250 aa)). The active-site Proton acceptor is aspartate 113.

The protein belongs to the protein kinase superfamily. Ser/Thr protein kinase family. Autophosphorylated.

It catalyses the reaction L-seryl-[protein] + ATP = O-phospho-L-seryl-[protein] + ADP + H(+). It carries out the reaction L-threonyl-[protein] + ATP = O-phospho-L-threonyl-[protein] + ADP + H(+). Involved in water-stress responses. The protein is Abscisic acid-inducible protein kinase of Triticum aestivum (Wheat).